A 428-amino-acid chain; its full sequence is Histone-lysine N-methyltransferase SMYD3 (428 aa).

Methionine 1 is modified (N-acetylmethionine). Residues 4–240 (LKVEKFTTAN…AGEELTICYL (237 aa)) form the SET domain. 14 to 16 (RGN) lines the S-adenosyl-L-methionine pocket. Zn(2+)-binding residues include cysteine 49, cysteine 52, cysteine 62, cysteine 65, cysteine 71, cysteine 75, histidine 83, and cysteine 87. The MYND-type zinc finger occupies 49–87 (CDRCLLGKEKLMRCSQCRIAKYCSAKCQKKAWPDHRREC). S-adenosyl-L-methionine contacts are provided by residues tyrosine 124, asparagine 132, 205–206 (NH), tyrosine 239, and phenylalanine 259. The C-terminal domain; essential for histone methyltransferase activity, nuclear localization and mediates interaction with HSP90AA1 stretch occupies residues 272-428 (DADMLTGDEQ…EECDANIRAS (157 aa)).

The protein belongs to the class V-like SAM-binding methyltransferase superfamily. Histone-lysine methyltransferase family. In terms of assembly, interacts with HSPCA. Interacts with HELZ. Interacts with POLR2A; the interaction may be indirect and may be mediated by HELZ. Interacts with HSP90AA1; this interaction enhances SMYD3 histone-lysine N-methyltransferase.

The protein resides in the cytoplasm. It is found in the nucleus. It catalyses the reaction L-lysyl(4)-[histone H3] + 3 S-adenosyl-L-methionine = N(6),N(6),N(6)-trimethyl-L-lysyl(4)-[histone H3] + 3 S-adenosyl-L-homocysteine + 3 H(+). Its activity is regulated as follows. Histone methyltransferase activity strongly stimulated by HSPCA. Histone methyltransferase. Specifically methylates 'Lys-4' of histone H3, inducing di- and tri-methylation, but not monomethylation. Also methylates 'Lys-5' of histone H4. Plays an important role in transcriptional activation as a member of an RNA polymerase complex. Binds DNA containing 5'-CCCTCC-3' or 5'-GAGGGG-3' sequences. The chain is Histone-lysine N-methyltransferase SMYD3 (Smyd3) from Mus musculus (Mouse).